An 87-amino-acid polypeptide reads, in one-letter code: Phosphoribosyl-ATP pyrophosphatase (87 aa).

The protein belongs to the PRA-PH family.

The protein localises to the cytoplasm. It carries out the reaction 1-(5-phospho-beta-D-ribosyl)-ATP + H2O = 1-(5-phospho-beta-D-ribosyl)-5'-AMP + diphosphate + H(+). Its pathway is amino-acid biosynthesis; L-histidine biosynthesis; L-histidine from 5-phospho-alpha-D-ribose 1-diphosphate: step 2/9. In Saccharopolyspora erythraea (strain ATCC 11635 / DSM 40517 / JCM 4748 / NBRC 13426 / NCIMB 8594 / NRRL 2338), this protein is Phosphoribosyl-ATP pyrophosphatase.